Reading from the N-terminus, the 630-residue chain is Phosphomethylpyrimidine synthase (630 aa).

Disordered regions lie at residues 1–22 (MADI…TTGP) and 97–120 (AQRE…VPAF). Residues N224, M253, Y282, H318, 338–340 (SRG), 379–382 (DGLR), and E418 contribute to the substrate site. H422 provides a ligand contact to Zn(2+). Residue Y445 coordinates substrate. H486 contributes to the Zn(2+) binding site. Residues C566, C569, and C574 each coordinate [4Fe-4S] cluster.

Belongs to the ThiC family. In terms of assembly, homodimer. It depends on [4Fe-4S] cluster as a cofactor.

The enzyme catalyses 5-amino-1-(5-phospho-beta-D-ribosyl)imidazole + S-adenosyl-L-methionine = 4-amino-2-methyl-5-(phosphooxymethyl)pyrimidine + CO + 5'-deoxyadenosine + formate + L-methionine + 3 H(+). It participates in cofactor biosynthesis; thiamine diphosphate biosynthesis. In terms of biological role, catalyzes the synthesis of the hydroxymethylpyrimidine phosphate (HMP-P) moiety of thiamine from aminoimidazole ribotide (AIR) in a radical S-adenosyl-L-methionine (SAM)-dependent reaction. In Sphingopyxis alaskensis (strain DSM 13593 / LMG 18877 / RB2256) (Sphingomonas alaskensis), this protein is Phosphomethylpyrimidine synthase.